Reading from the N-terminus, the 440-residue chain is Chromosome partition protein MukF (440 aa).

Positions 208–236 (LSETSGTLRELQDTLEAAGDKLQANLLRI) are leucine-zipper.

Belongs to the MukF family. In terms of assembly, interacts, and probably forms a ternary complex, with MukE and MukB via its C-terminal region. The complex formation is stimulated by calcium or magnesium. It is required for an interaction between MukE and MukB.

It localises to the cytoplasm. Its subcellular location is the nucleoid. In terms of biological role, involved in chromosome condensation, segregation and cell cycle progression. May participate in facilitating chromosome segregation by condensation DNA from both sides of a centrally located replisome during cell division. Not required for mini-F plasmid partitioning. Probably acts via its interaction with MukB and MukE. Overexpression results in anucleate cells. It has a calcium binding activity. The sequence is that of Chromosome partition protein MukF from Photorhabdus laumondii subsp. laumondii (strain DSM 15139 / CIP 105565 / TT01) (Photorhabdus luminescens subsp. laumondii).